A 131-amino-acid chain; its full sequence is Profilin-5 (131 aa).

A disulfide bridge connects residues cysteine 13 and cysteine 115. The short motif at 81–97 (AVIRGKKGAGGITIKKT) is the Involved in PIP2 interaction element. Phosphothreonine is present on threonine 111.

This sequence belongs to the profilin family. In terms of assembly, occurs in many kinds of cells as a complex with monomeric actin in a 1:1 ratio. In terms of processing, phosphorylated by MAP kinases.

Its subcellular location is the cytoplasm. It is found in the cytoskeleton. Functionally, binds to actin and affects the structure of the cytoskeleton. At high concentrations, profilin prevents the polymerization of actin, whereas it enhances it at low concentrations. The protein is Profilin-5 of Phleum pratense (Common timothy).